The chain runs to 209 residues: Large ribosomal subunit protein uL3 (209 aa).

The interval 128–156 is disordered; sequence FAGGSRTHGQSDRLRAPGSVGGSSDPSRT.

This sequence belongs to the universal ribosomal protein uL3 family. As to quaternary structure, part of the 50S ribosomal subunit. Forms a cluster with proteins L14 and L19.

Its function is as follows. One of the primary rRNA binding proteins, it binds directly near the 3'-end of the 23S rRNA, where it nucleates assembly of the 50S subunit. The sequence is that of Large ribosomal subunit protein uL3 from Prosthecochloris aestuarii (strain DSM 271 / SK 413).